Here is a 545-residue protein sequence, read N- to C-terminus: MATNYIFVTGGVVSSLGKGIAAASLASILEARGLNVTIMKLDPYINVDPGTMSPTQHGEVFVTQDGAETDLDLGHYERFIRSKMSKANNFTSGKIYSEVLRKERRGDYLGATIQVIPHITNEIKERVIEGGKGRDVVIVEVGGTVGDIESLPFLEALRQLAVDVGREKTLFMHLTLVPYIPTAGEVKTKPTQHSVKELLSIGIQPDVLICRSDRAIPSNERKKIALFCNVPERAVISLKDVDSIYRIPELLKSQGLDTFVCDRFRLDCPEADLSEWEQVLYRQANPTGEVTIGMVGKYVELPDAYKSVNEALKHAGLTNRLTVNIKYIDSQDIETKGVELLHGLDAILVPGGFGYRGVEGKIRTAQYARENKIPYLGICLGMQIALIEYARNVAGLTQANSSEFDKDCPQPVVGLITEWQDESGNVETRSDESDLGGTMRLGAQQCHLIEGTKAREVYGAETIVERHRHRYEVNNTLLPQIEAAGLKVSGLSADRKLVEIIEIPNHPWFIAAQFHPEFTSTPRDGHPLFAGFVKAAKDYQDSHKA.

The tract at residues 1–266 (MATNYIFVTG…DTFVCDRFRL (266 aa)) is amidoligase domain. Ser14 is a binding site for CTP. Position 14 (Ser14) interacts with UTP. ATP contacts are provided by residues 15–20 (SLGKGI) and Asp72. Mg(2+) is bound by residues Asp72 and Glu140. CTP-binding positions include 147-149 (DIE), 187-192 (KTKPTQ), and Lys223. UTP-binding positions include 187–192 (KTKPTQ) and Lys223. 239–241 (KDV) contributes to the ATP binding site. One can recognise a Glutamine amidotransferase type-1 domain in the interval 291–542 (TIGMVGKYVE…VKAAKDYQDS (252 aa)). Gly352 contributes to the L-glutamine binding site. Catalysis depends on Cys379, which acts as the Nucleophile; for glutamine hydrolysis. Residues 380–383 (LGMQ), Glu403, and Arg470 each bind L-glutamine. Active-site residues include His515 and Glu517.

It belongs to the CTP synthase family. Homotetramer.

The enzyme catalyses UTP + L-glutamine + ATP + H2O = CTP + L-glutamate + ADP + phosphate + 2 H(+). The catalysed reaction is L-glutamine + H2O = L-glutamate + NH4(+). It catalyses the reaction UTP + NH4(+) + ATP = CTP + ADP + phosphate + 2 H(+). The protein operates within pyrimidine metabolism; CTP biosynthesis via de novo pathway; CTP from UDP: step 2/2. Allosterically activated by GTP, when glutamine is the substrate; GTP has no effect on the reaction when ammonia is the substrate. The allosteric effector GTP functions by stabilizing the protein conformation that binds the tetrahedral intermediate(s) formed during glutamine hydrolysis. Inhibited by the product CTP, via allosteric rather than competitive inhibition. Functionally, catalyzes the ATP-dependent amination of UTP to CTP with either L-glutamine or ammonia as the source of nitrogen. Regulates intracellular CTP levels through interactions with the four ribonucleotide triphosphates. In Actinobacillus pleuropneumoniae serotype 7 (strain AP76), this protein is CTP synthase.